The primary structure comprises 1579 residues: tRNA (guanosine(18)-2'-O)-methyltransferase TARBP1 (1579 aa).

An N-acetylmethionine modification is found at Met-1. Residues Val-1501, Gly-1524, Ile-1544, Gln-1546, and Leu-1553 each coordinate S-adenosyl-L-homocysteine.

Belongs to the class IV-like SAM-binding methyltransferase superfamily. RNA methyltransferase TrmH family. In terms of assembly, monomer and homodimer.

The enzyme catalyses guanosine(18) in tRNA + S-adenosyl-L-methionine = 2'-O-methylguanosine(18) in tRNA + S-adenosyl-L-homocysteine + H(+). In terms of biological role, S-adenosyl-L-methionine-dependent 2'-O-ribose methyltransferase that catalyzes the formation of 2'-O-methylguanosine at position 18 (Gm18) in a subset of tRNA. Selectively mediates Gm18 methylation of tRNAGln-TTG/CTG and tRNASer-TGA/GCT. Gm18 modification can enhance the stability of modified tRNAs. The protein is tRNA (guanosine(18)-2'-O)-methyltransferase TARBP1 of Mus musculus (Mouse).